Consider the following 963-residue polypeptide: Putative RNA Helicase B962L (963 aa).

Residues 43–229 (IPTSLADRVL…FGIGKENIIL (187 aa)) enclose the Helicase ATP-binding domain. Residue 56–63 (SRTGSGKS) participates in ATP binding. The short motif at 167–170 (DEAH) is the DEAH box element. Residues 253-459 (ACETALTIHK…TIKKNKEGVF (207 aa)) enclose the Helicase C-terminal domain. Residues 521–541 (GYFWQAAISDIAIILAVVSVV) form a helical membrane-spanning segment.

It belongs to the DEAD box helicase family. DEAH subfamily.

Its subcellular location is the host membrane. It localises to the virion. It catalyses the reaction ATP + H2O = ADP + phosphate + H(+). The sequence is that of Putative RNA Helicase B962L from African swine fever virus (isolate Tick/Malawi/Lil 20-1/1983) (ASFV).